Reading from the N-terminus, the 119-residue chain is Large ribosomal subunit protein bL20 (119 aa).

It belongs to the bacterial ribosomal protein bL20 family.

Its function is as follows. Binds directly to 23S ribosomal RNA and is necessary for the in vitro assembly process of the 50S ribosomal subunit. It is not involved in the protein synthesizing functions of that subunit. The protein is Large ribosomal subunit protein bL20 of Nitrobacter hamburgensis (strain DSM 10229 / NCIMB 13809 / X14).